A 319-amino-acid chain; its full sequence is Glutamyl-Q tRNA(Asp) synthetase (319 aa).

L-glutamate is bound by residues 23-27 and Glu-59; that span reads RFAPS. The 'HIGH' region motif lies at 26 to 36; sequence PSPSGPLHAGS. Residues Cys-115, Cys-117, Tyr-139, and Cys-143 each contribute to the Zn(2+) site. The L-glutamate site is built by Tyr-197 and Arg-215. The 'KMSKS' region signature appears at 254-258; it reads KLSKQ. Lys-257 lines the ATP pocket.

The protein belongs to the class-I aminoacyl-tRNA synthetase family. GluQ subfamily. The cofactor is Zn(2+).

Its function is as follows. Catalyzes the tRNA-independent activation of glutamate in presence of ATP and the subsequent transfer of glutamate onto a tRNA(Asp). Glutamate is transferred on the 2-amino-5-(4,5-dihydroxy-2-cyclopenten-1-yl) moiety of the queuosine in the wobble position of the QUC anticodon. The chain is Glutamyl-Q tRNA(Asp) synthetase from Bordetella bronchiseptica (strain ATCC BAA-588 / NCTC 13252 / RB50) (Alcaligenes bronchisepticus).